Reading from the N-terminus, the 198-residue chain is Small ribosomal subunit protein uS2 (198 aa).

Belongs to the universal ribosomal protein uS2 family.

This Methanobrevibacter smithii (strain ATCC 35061 / DSM 861 / OCM 144 / PS) protein is Small ribosomal subunit protein uS2.